Reading from the N-terminus, the 243-residue chain is Ribosomal RNA small subunit methyltransferase G (243 aa).

S-adenosyl-L-methionine is bound by residues glycine 79, phenylalanine 84, 130-131, and arginine 150; that span reads AE. The tract at residues 219–243 is disordered; sequence EKKKQTPNKYPRKPGTPGKDPIGKK.

It belongs to the methyltransferase superfamily. RNA methyltransferase RsmG family.

The protein localises to the cytoplasm. In terms of biological role, specifically methylates the N7 position of a guanine in 16S rRNA. The polypeptide is Ribosomal RNA small subunit methyltransferase G (Pediococcus pentosaceus (strain ATCC 25745 / CCUG 21536 / LMG 10740 / 183-1w)).